The sequence spans 431 residues: Adenylosuccinate synthetase (431 aa).

GTP-binding positions include 13-19 (GDEGKGK) and 41-43 (GHT). The active-site Proton acceptor is Asp14. The Mg(2+) site is built by Asp14 and Gly41. IMP is bound by residues 14 to 17 (DEGK), 39 to 42 (NAGH), Thr130, Arg144, Gln225, Thr240, and Arg304. Residue His42 is the Proton donor of the active site. Position 300–306 (300–306 (ATTGRKR)) interacts with substrate. Residues Arg306, 332 to 334 (KLD), and 415 to 417 (STG) contribute to the GTP site.

It belongs to the adenylosuccinate synthetase family. As to quaternary structure, homodimer. The cofactor is Mg(2+).

The protein resides in the cytoplasm. The enzyme catalyses IMP + L-aspartate + GTP = N(6)-(1,2-dicarboxyethyl)-AMP + GDP + phosphate + 2 H(+). The protein operates within purine metabolism; AMP biosynthesis via de novo pathway; AMP from IMP: step 1/2. Functionally, plays an important role in the de novo pathway of purine nucleotide biosynthesis. Catalyzes the first committed step in the biosynthesis of AMP from IMP. In Shewanella halifaxensis (strain HAW-EB4), this protein is Adenylosuccinate synthetase.